Reading from the N-terminus, the 311-residue chain is tRNA dimethylallyltransferase (311 aa).

9-16 (GPTAVGKT) serves as a coordination point for ATP. 11–16 (TAVGKT) contacts substrate. Positions 34–37 (DSMQ) are interaction with substrate tRNA.

The protein belongs to the IPP transferase family. In terms of assembly, monomer. Mg(2+) is required as a cofactor.

The catalysed reaction is adenosine(37) in tRNA + dimethylallyl diphosphate = N(6)-dimethylallyladenosine(37) in tRNA + diphosphate. Catalyzes the transfer of a dimethylallyl group onto the adenine at position 37 in tRNAs that read codons beginning with uridine, leading to the formation of N6-(dimethylallyl)adenosine (i(6)A). This is tRNA dimethylallyltransferase from Clostridium botulinum (strain Hall / ATCC 3502 / NCTC 13319 / Type A).